The primary structure comprises 383 residues: Multidrug resistance protein MexA (383 aa).

Positions 1-23 (MQRTPAMRVLVPALLVAISALSG) are cleaved as a signal peptide. Residue Cys24 is the site of N-palmitoyl cysteine attachment. Cys24 is lipidated: S-diacylglycerol cysteine. Positions 97 to 151 (ATYEADYQSAQANLASTQEQAQRYKLLVADQAVSKQQYADANAAYLQSKAAVEQA) form a coiled coil.

This sequence belongs to the membrane fusion protein (MFP) (TC 8.A.1) family. As to quaternary structure, component of the MexAB-OprM multidrug efflux complex, composed of six MexA subunits forming a hexameric tube, binding to a MexB trimer, which interact with the trimeric OprM outer membrane channel protein. OprM is thought to not directly contact MexB; instead, MexA joins MexB and OprM by forming a funnel-like hexamer anchored to the inner membrane. MexA may initially form a hexameric ring complex with MexB prior to OprM, then OprM undergoes a conformational change as it contacts MexA, allowing the periplasmic gate to open. It is thought that, under high intracellular substrate concentration, MexB ejects substrate into the tunnel formed by MexA-OprM; as the substrate level declines, conformational changes in MexB cause efflux to reduce and stop and the complex shifts to the closed state. MexB subunit acts as a substrate:proton antiporter and activity is enhanced significantly when in complex with MexA and OprM, in vitro.

The protein resides in the cell inner membrane. With respect to regulation, export of antibiotics and solvents is dramatically decreased in the presence of the protonophore carbonyl cyanide m-chlorophenylhydrazone (CCCP), therefore may be driven by a proton gradient. Antibiotic efflux is inhibited by pyridopyrimidine derivatives, such as ABI-PP, acting by binding to a hydrophobic pocket in MexB. The periplasmic linker component of the MexAB-OprM efflux system that confers multidrug resistance. Functions as the major efflux pump for n-hexane and p-xylene efflux. Has been shown in one study to be involved in the active efflux of the autoinducer N-(3-oxododecanoyl) homoserine lactone, thereby playing an indirect role in quorum-sensing; but has been shown in another study not to be involved in efflux of this autoinducer. Over-expression of the pump increases antibiotic and solvent efflux capacities. Implicated in the secretion of the siderophore pyoverdine. In Pseudomonas aeruginosa (strain ATCC 15692 / DSM 22644 / CIP 104116 / JCM 14847 / LMG 12228 / 1C / PRS 101 / PAO1), this protein is Multidrug resistance protein MexA (mexA).